The sequence spans 150 residues: UPF0178 protein PP_5221 (150 aa).

This sequence belongs to the UPF0178 family.

This Pseudomonas putida (strain ATCC 47054 / DSM 6125 / CFBP 8728 / NCIMB 11950 / KT2440) protein is UPF0178 protein PP_5221.